The primary structure comprises 188 residues: Guanylate kinase (188 aa).

Positions 4–183 (RNIVVLTAPS…AVEETLTRIR (180 aa)) constitute a Guanylate kinase-like domain. Residue 11-18 (APSGAGKT) participates in ATP binding.

Belongs to the guanylate kinase family.

It is found in the cytoplasm. The enzyme catalyses GMP + ATP = GDP + ADP. Functionally, essential for recycling GMP and indirectly, cGMP. The polypeptide is Guanylate kinase (Salinibacter ruber (strain DSM 13855 / M31)).